We begin with the raw amino-acid sequence, 649 residues long: tRNA-guanine(15) transglycosylase (649 aa).

Aspartate 88 (nucleophile) is an active-site residue. The substrate site is built by aspartate 123 and alanine 194. Zn(2+) contacts are provided by cysteine 280, cysteine 282, and cysteine 285. The PUA domain maps to 573–648 (KYRIVIDSSV…VAATLRGGLK (76 aa)).

The protein belongs to the archaeosine tRNA-ribosyltransferase family. Zn(2+) serves as cofactor.

The enzyme catalyses guanosine(15) in tRNA + 7-cyano-7-deazaguanine = 7-cyano-7-carbaguanosine(15) in tRNA + guanine. The protein operates within tRNA modification; archaeosine-tRNA biosynthesis. Functionally, exchanges the guanine residue with 7-cyano-7-deazaguanine (preQ0) at position 15 in the dihydrouridine loop (D-loop) of archaeal tRNAs. The sequence is that of tRNA-guanine(15) transglycosylase from Methanococcus maripaludis (strain DSM 14266 / JCM 13030 / NBRC 101832 / S2 / LL).